A 37-amino-acid chain; its full sequence is MKVRASVKKICRNCKIVKRSGVVRVICVEPKHKQRQG.

Belongs to the bacterial ribosomal protein bL36 family.

This Shewanella baltica (strain OS223) protein is Large ribosomal subunit protein bL36.